We begin with the raw amino-acid sequence, 193 residues long: Crossover junction endodeoxyribonuclease RuvC (193 aa).

Active-site residues include aspartate 7, glutamate 68, and aspartate 141. The Mg(2+) site is built by aspartate 7, glutamate 68, and aspartate 141. The segment at 174–193 is disordered; that stretch reads RQWAQATQHATRRRGVRRGM. Residues 183-193 show a composition bias toward basic residues; it reads ATRRRGVRRGM.

Belongs to the RuvC family. In terms of assembly, homodimer which binds Holliday junction (HJ) DNA. The HJ becomes 2-fold symmetrical on binding to RuvC with unstacked arms; it has a different conformation from HJ DNA in complex with RuvA. In the full resolvosome a probable DNA-RuvA(4)-RuvB(12)-RuvC(2) complex forms which resolves the HJ. It depends on Mg(2+) as a cofactor.

Its subcellular location is the cytoplasm. It catalyses the reaction Endonucleolytic cleavage at a junction such as a reciprocal single-stranded crossover between two homologous DNA duplexes (Holliday junction).. The RuvA-RuvB-RuvC complex processes Holliday junction (HJ) DNA during genetic recombination and DNA repair. Endonuclease that resolves HJ intermediates. Cleaves cruciform DNA by making single-stranded nicks across the HJ at symmetrical positions within the homologous arms, yielding a 5'-phosphate and a 3'-hydroxyl group; requires a central core of homology in the junction. The consensus cleavage sequence is 5'-(A/T)TT(C/G)-3'. Cleavage occurs on the 3'-side of the TT dinucleotide at the point of strand exchange. HJ branch migration catalyzed by RuvA-RuvB allows RuvC to scan DNA until it finds its consensus sequence, where it cleaves and resolves the cruciform DNA. The sequence is that of Crossover junction endodeoxyribonuclease RuvC from Bifidobacterium animalis subsp. lactis (strain AD011).